The primary structure comprises 64 residues: MAKAKGARIIITLECTECRTNPAQRSPGVSRYTTTKNRRTTTGRLELKKFCRYCNKHTIHREIK.

Belongs to the bacterial ribosomal protein bL33 family.

In Thermosynechococcus vestitus (strain NIES-2133 / IAM M-273 / BP-1), this protein is Large ribosomal subunit protein bL33.